A 291-amino-acid polypeptide reads, in one-letter code: Peptide methionine sulfoxide reductase MsrB/MsrA (291 aa).

Residues 1–124 enclose the MsrB domain; the sequence is MLANLQHLSD…NSAALRFVAR (124 aa). Cys113 (nucleophile) is an active-site residue. A peptide methionine sulfoxide reductase A region spans residues 127–284; that stretch reads GTALFAAGCF…PGGYCHVSLH (158 aa). The active site involves Cys135.

It in the N-terminal section; belongs to the MsrB Met sulfoxide reductase family. In the C-terminal section; belongs to the MsrA Met sulfoxide reductase family.

It carries out the reaction L-methionyl-[protein] + [thioredoxin]-disulfide + H2O = L-methionyl-(R)-S-oxide-[protein] + [thioredoxin]-dithiol. The catalysed reaction is L-methionyl-[protein] + [thioredoxin]-disulfide + H2O = L-methionyl-(S)-S-oxide-[protein] + [thioredoxin]-dithiol. It catalyses the reaction [thioredoxin]-disulfide + L-methionine + H2O = L-methionine (S)-S-oxide + [thioredoxin]-dithiol. Has an important function as a repair enzyme for proteins that have been inactivated by oxidation. Catalyzes the reversible oxidation-reduction of methionine sulfoxide in proteins to methionine. The polypeptide is Peptide methionine sulfoxide reductase MsrB/MsrA (msrAB) (Treponema pallidum (strain Nichols)).